A 506-amino-acid chain; its full sequence is Cobyric acid synthase (506 aa).

One can recognise a GATase cobBQ-type domain in the interval D251 to F448. The active-site Nucleophile is C332. Residue H440 is part of the active site.

This sequence belongs to the CobB/CobQ family. CobQ subfamily.

It participates in cofactor biosynthesis; adenosylcobalamin biosynthesis. Functionally, catalyzes amidations at positions B, D, E, and G on adenosylcobyrinic A,C-diamide. NH(2) groups are provided by glutamine, and one molecule of ATP is hydrogenolyzed for each amidation. This Salmonella arizonae (strain ATCC BAA-731 / CDC346-86 / RSK2980) protein is Cobyric acid synthase.